We begin with the raw amino-acid sequence, 651 residues long: Acetyl-coenzyme A synthetase (651 aa).

Residues 190 to 193 (RGGK), threonine 312, and asparagine 336 each bind CoA. ATP is bound by residues 388-390 (GEP), 412-417 (DTWWQT), aspartate 501, and arginine 516. Residue serine 524 coordinates CoA. Arginine 527 contributes to the ATP binding site. Residues valine 538, histidine 540, and valine 543 each coordinate Mg(2+). CoA is bound at residue arginine 585. Lysine 610 is modified (N6-acetyllysine).

This sequence belongs to the ATP-dependent AMP-binding enzyme family. Mg(2+) serves as cofactor. Acetylated. Deacetylation by the SIR2-homolog deacetylase activates the enzyme.

It carries out the reaction acetate + ATP + CoA = acetyl-CoA + AMP + diphosphate. Its function is as follows. Catalyzes the conversion of acetate into acetyl-CoA (AcCoA), an essential intermediate at the junction of anabolic and catabolic pathways. AcsA undergoes a two-step reaction. In the first half reaction, AcsA combines acetate with ATP to form acetyl-adenylate (AcAMP) intermediate. In the second half reaction, it can then transfer the acetyl group from AcAMP to the sulfhydryl group of CoA, forming the product AcCoA. The sequence is that of Acetyl-coenzyme A synthetase from Mesorhizobium japonicum (strain LMG 29417 / CECT 9101 / MAFF 303099) (Mesorhizobium loti (strain MAFF 303099)).